A 145-amino-acid polypeptide reads, in one-letter code: UPF0735 ACT domain-containing protein CPE1414 (145 aa).

Positions 69–144 (IFNMVVTHEK…GVEKVEFVAM (76 aa)) constitute an ACT domain.

The protein belongs to the UPF0735 family.

The polypeptide is UPF0735 ACT domain-containing protein CPE1414 (Clostridium perfringens (strain 13 / Type A)).